A 201-amino-acid polypeptide reads, in one-letter code: Peptide deformylase (201 aa).

The disordered stretch occupies residues 1–34 (MSLNFAAMARQSERQASTVMVPKGEEQPESPKIH). The span at 23–32 (KGEEQPESPK) shows a compositional bias: basic and acidic residues. Residues C121 and H163 each coordinate Fe cation. The active site involves E164. Position 167 (H167) interacts with Fe cation.

The protein belongs to the polypeptide deformylase family. The cofactor is Fe(2+).

The catalysed reaction is N-terminal N-formyl-L-methionyl-[peptide] + H2O = N-terminal L-methionyl-[peptide] + formate. Functionally, removes the formyl group from the N-terminal Met of newly synthesized proteins. Requires at least a dipeptide for an efficient rate of reaction. N-terminal L-methionine is a prerequisite for activity but the enzyme has broad specificity at other positions. The chain is Peptide deformylase from Synechococcus sp. (strain RCC307).